The chain runs to 489 residues: Glycogen synthase (489 aa).

ADP-alpha-D-glucose is bound at residue Arg20.

It belongs to the glycosyltransferase 1 family. Bacterial/plant glycogen synthase subfamily.

It carries out the reaction [(1-&gt;4)-alpha-D-glucosyl](n) + ADP-alpha-D-glucose = [(1-&gt;4)-alpha-D-glucosyl](n+1) + ADP + H(+). Its pathway is glycan biosynthesis; glycogen biosynthesis. Functionally, synthesizes alpha-1,4-glucan chains using ADP-glucose. This chain is Glycogen synthase, found in Chlorobium chlorochromatii (strain CaD3).